The chain runs to 428 residues: Enolase (428 aa).

A (2R)-2-phosphoglycerate-binding site is contributed by Gln-163. Residue Glu-205 is the Proton donor of the active site. Residues Asp-242, Glu-285, and Asp-312 each contribute to the Mg(2+) site. Residues Lys-337, Arg-366, Ser-367, and Lys-388 each contribute to the (2R)-2-phosphoglycerate site. Lys-337 serves as the catalytic Proton acceptor.

Belongs to the enolase family. Mg(2+) is required as a cofactor.

It localises to the cytoplasm. The protein localises to the secreted. It is found in the cell surface. The enzyme catalyses (2R)-2-phosphoglycerate = phosphoenolpyruvate + H2O. It functions in the pathway carbohydrate degradation; glycolysis; pyruvate from D-glyceraldehyde 3-phosphate: step 4/5. Its function is as follows. Catalyzes the reversible conversion of 2-phosphoglycerate (2-PG) into phosphoenolpyruvate (PEP). It is essential for the degradation of carbohydrates via glycolysis. The protein is Enolase of Finegoldia magna (strain ATCC 29328 / DSM 20472 / WAL 2508) (Peptostreptococcus magnus).